Here is a 370-residue protein sequence, read N- to C-terminus: Phospho-N-acetylmuramoyl-pentapeptide-transferase (370 aa).

11 helical membrane passes run 21–41 (PTSI…DLFI), 46–66 (LLVP…WGII), 92–112 (PSMG…LFAL), 117–137 (FSKQ…IGLI), 151–171 (LSVK…LVLI), 181–201 (ILIF…IALF), 217–237 (DGLA…ELII), 243–263 (NYAI…FLIF), 270–290 (VFMG…VALL), 298–318 (LIMG…VGVF), and 349–369 (TIIV…AIML).

It belongs to the glycosyltransferase 4 family. MraY subfamily. It depends on Mg(2+) as a cofactor.

Its subcellular location is the cell inner membrane. The catalysed reaction is UDP-N-acetyl-alpha-D-muramoyl-L-alanyl-gamma-D-glutamyl-meso-2,6-diaminopimeloyl-D-alanyl-D-alanine + di-trans,octa-cis-undecaprenyl phosphate = di-trans,octa-cis-undecaprenyl diphospho-N-acetyl-alpha-D-muramoyl-L-alanyl-D-glutamyl-meso-2,6-diaminopimeloyl-D-alanyl-D-alanine + UMP. The protein operates within cell wall biogenesis; peptidoglycan biosynthesis. In terms of biological role, catalyzes the initial step of the lipid cycle reactions in the biosynthesis of the cell wall peptidoglycan: transfers peptidoglycan precursor phospho-MurNAc-pentapeptide from UDP-MurNAc-pentapeptide onto the lipid carrier undecaprenyl phosphate, yielding undecaprenyl-pyrophosphoryl-MurNAc-pentapeptide, known as lipid I. The chain is Phospho-N-acetylmuramoyl-pentapeptide-transferase from Prochlorococcus marinus (strain SARG / CCMP1375 / SS120).